The following is a 140-amino-acid chain: Nucleoside diphosphate kinase (140 aa).

6 residues coordinate ATP: Lys11, Phe59, Arg87, Thr93, Arg104, and Asn114. The active-site Pros-phosphohistidine intermediate is His117.

The protein belongs to the NDK family. In terms of assembly, homotetramer. Requires Mg(2+) as cofactor.

It is found in the cytoplasm. The enzyme catalyses a 2'-deoxyribonucleoside 5'-diphosphate + ATP = a 2'-deoxyribonucleoside 5'-triphosphate + ADP. It carries out the reaction a ribonucleoside 5'-diphosphate + ATP = a ribonucleoside 5'-triphosphate + ADP. Functionally, major role in the synthesis of nucleoside triphosphates other than ATP. The ATP gamma phosphate is transferred to the NDP beta phosphate via a ping-pong mechanism, using a phosphorylated active-site intermediate. The protein is Nucleoside diphosphate kinase of Brucella canis (strain ATCC 23365 / NCTC 10854 / RM-666).